The chain runs to 503 residues: uncharacterized protein (503 aa).

ABC transporter domains follow at residues V8 to D249 and I261 to I499. Position 43 to 50 (G43 to S50) interacts with ATP.

It belongs to the ABC transporter superfamily.

Functionally, probably part of a binding-protein-dependent transport system YphDEF. Probably responsible for energy coupling to the transport system. This is an uncharacterized protein from Escherichia coli (strain K12).